The sequence spans 375 residues: Alcohol dehydrogenase 1 (375 aa).

At Ser2 the chain carries N-acetylserine. Positions 47, 68, 98, 101, 104, 112, and 175 each coordinate Zn(2+). NAD(+)-binding positions include 200–205, Asp224, and Lys229; that span reads WSGRVG. Lys234 carries the N6-succinyllysine modification. NAD(+) is bound at residue 293–295; that stretch reads VGV. Lys340 bears the N6-succinyllysine mark. NAD(+) is bound at residue Arg370.

Belongs to the zinc-containing alcohol dehydrogenase family. Class-I subfamily. As to quaternary structure, homodimer. Zn(2+) serves as cofactor.

It localises to the cytoplasm. The catalysed reaction is a primary alcohol + NAD(+) = an aldehyde + NADH + H(+). It carries out the reaction a secondary alcohol + NAD(+) = a ketone + NADH + H(+). This is Alcohol dehydrogenase 1 (ADH1) from Geomys knoxjonesi (Jones' pocket gopher).